The chain runs to 173 residues: Transcription factor E (173 aa).

One can recognise an HTH TFE/IIEalpha-type domain in the interval 9–92; that stretch reads NNPATRAYIH…LWQLRIDLLY (84 aa).

The protein belongs to the TFE family. Monomer. Interaction with RNA polymerase subunits RpoF and RpoE is necessary for Tfe stimulatory transcription activity. Able to interact with Tbp and RNA polymerase in the absence of DNA promoter. Interacts both with the preinitiation and elongation complexes.

In terms of biological role, transcription factor that plays a role in the activation of archaeal genes transcribed by RNA polymerase. Facilitates transcription initiation by enhancing TATA-box recognition by TATA-box-binding protein (Tbp), and transcription factor B (Tfb) and RNA polymerase recruitment. Not absolutely required for transcription in vitro, but particularly important in cases where Tbp or Tfb function is not optimal. It dynamically alters the nucleic acid-binding properties of RNA polymerases by stabilizing the initiation complex and destabilizing elongation complexes. Seems to translocate with the RNA polymerase following initiation and acts by binding to the non template strand of the transcription bubble in elongation complexes. The sequence is that of Transcription factor E from Methanoregula boonei (strain DSM 21154 / JCM 14090 / 6A8).